A 211-amino-acid polypeptide reads, in one-letter code: V-type ATP synthase subunit D (211 aa).

The protein belongs to the V-ATPase D subunit family.

Produces ATP from ADP in the presence of a proton gradient across the membrane. This chain is V-type ATP synthase subunit D, found in Enterococcus faecalis (strain ATCC 700802 / V583).